Reading from the N-terminus, the 129-residue chain is Trefoil factor 2 (129 aa).

A signal peptide spans 1 to 23 (MGRRDAQLLAALLVLGLCALAGS). P-type domains follow at residues 29–73 (CQCS…FHPL) and 79–122 (DQCV…FFPK). Disulfide bonds link cysteine 29–cysteine 127, cysteine 31–cysteine 58, cysteine 42–cysteine 57, cysteine 52–cysteine 69, cysteine 81–cysteine 107, cysteine 91–cysteine 106, and cysteine 101–cysteine 118.

Stomach.

The protein localises to the secreted. In terms of biological role, inhibits gastrointestinal motility and gastric acid secretion. Could function as a structural component of gastric mucus, possibly by stabilizing glycoproteins in the mucus gel through interactions with carbohydrate side chains. This is Trefoil factor 2 (TFF2) from Homo sapiens (Human).